The primary structure comprises 181 residues: Ribonuclease HII (181 aa).

One can recognise an RNase H type-2 domain in the interval 1–181 (MICGIDEVGR…SLHRKNFKLI (181 aa)). Residues Asp-6, Glu-7, and Asp-98 each coordinate a divalent metal cation.

It belongs to the RNase HII family. It depends on Mn(2+) as a cofactor. Mg(2+) serves as cofactor.

The protein resides in the cytoplasm. It catalyses the reaction Endonucleolytic cleavage to 5'-phosphomonoester.. Endonuclease that specifically degrades the RNA of RNA-DNA hybrids. The protein is Ribonuclease HII (rnhB) of Borreliella burgdorferi (strain ATCC 35210 / DSM 4680 / CIP 102532 / B31) (Borrelia burgdorferi).